Reading from the N-terminus, the 345-residue chain is N-acetyl-gamma-glutamyl-phosphate reductase (345 aa).

Cys149 is a catalytic residue.

The protein belongs to the NAGSA dehydrogenase family. Type 1 subfamily.

The protein localises to the cytoplasm. It catalyses the reaction N-acetyl-L-glutamate 5-semialdehyde + phosphate + NADP(+) = N-acetyl-L-glutamyl 5-phosphate + NADPH + H(+). The protein operates within amino-acid biosynthesis; L-arginine biosynthesis; N(2)-acetyl-L-ornithine from L-glutamate: step 3/4. Catalyzes the NADPH-dependent reduction of N-acetyl-5-glutamyl phosphate to yield N-acetyl-L-glutamate 5-semialdehyde. The protein is N-acetyl-gamma-glutamyl-phosphate reductase of Janthinobacterium sp. (strain Marseille) (Minibacterium massiliensis).